We begin with the raw amino-acid sequence, 82 residues long: RNA-binding protein Hfq (82 aa).

A Sm domain is found at 11 to 71 (DTFLNHVRKT…ISTIMPGAPI (61 aa)).

The protein belongs to the Hfq family. As to quaternary structure, homohexamer.

In terms of biological role, RNA chaperone that binds small regulatory RNA (sRNAs) and mRNAs to facilitate mRNA translational regulation in response to envelope stress, environmental stress and changes in metabolite concentrations. Also binds with high specificity to tRNAs. The protein is RNA-binding protein Hfq of Bradyrhizobium diazoefficiens (strain JCM 10833 / BCRC 13528 / IAM 13628 / NBRC 14792 / USDA 110).